The primary structure comprises 420 residues: UDP-N-acetylglucosamine 1-carboxyvinyltransferase (420 aa).

22 to 23 (KN) serves as a coordination point for phosphoenolpyruvate. Arginine 93 is a UDP-N-acetyl-alpha-D-glucosamine binding site. The active-site Proton donor is the cysteine 117. Cysteine 117 is subject to 2-(S-cysteinyl)pyruvic acid O-phosphothioketal. Residues aspartate 307 and isoleucine 329 each coordinate UDP-N-acetyl-alpha-D-glucosamine.

It belongs to the EPSP synthase family. MurA subfamily.

The protein localises to the cytoplasm. It catalyses the reaction phosphoenolpyruvate + UDP-N-acetyl-alpha-D-glucosamine = UDP-N-acetyl-3-O-(1-carboxyvinyl)-alpha-D-glucosamine + phosphate. Its pathway is cell wall biogenesis; peptidoglycan biosynthesis. In terms of biological role, cell wall formation. Adds enolpyruvyl to UDP-N-acetylglucosamine. The polypeptide is UDP-N-acetylglucosamine 1-carboxyvinyltransferase (Alcanivorax borkumensis (strain ATCC 700651 / DSM 11573 / NCIMB 13689 / SK2)).